A 126-amino-acid polypeptide reads, in one-letter code: Glycine cleavage system H protein (126 aa).

The Lipoyl-binding domain maps to 21-103 (TVTVGISDHA…YESGWIARIK (83 aa)). N6-lipoyllysine is present on lysine 62.

Belongs to the GcvH family. In terms of assembly, the glycine cleavage system is composed of four proteins: P, T, L and H. The cofactor is (R)-lipoate.

Its function is as follows. The glycine cleavage system catalyzes the degradation of glycine. The H protein shuttles the methylamine group of glycine from the P protein to the T protein. In Aliivibrio fischeri (strain ATCC 700601 / ES114) (Vibrio fischeri), this protein is Glycine cleavage system H protein.